A 149-amino-acid chain; its full sequence is 3-hydroxyacyl-[acyl-carrier-protein] dehydratase FabZ (149 aa).

Histidine 48 is an active-site residue.

The protein belongs to the thioester dehydratase family. FabZ subfamily.

The protein localises to the cytoplasm. The catalysed reaction is a (3R)-hydroxyacyl-[ACP] = a (2E)-enoyl-[ACP] + H2O. Its function is as follows. Involved in unsaturated fatty acids biosynthesis. Catalyzes the dehydration of short chain beta-hydroxyacyl-ACPs and long chain saturated and unsaturated beta-hydroxyacyl-ACPs. The polypeptide is 3-hydroxyacyl-[acyl-carrier-protein] dehydratase FabZ (Thermomicrobium roseum (strain ATCC 27502 / DSM 5159 / P-2)).